The following is a 211-amino-acid chain: Large ribosomal subunit protein uL3 (211 aa).

Glutamine 150 carries the N5-methylglutamine modification.

This sequence belongs to the universal ribosomal protein uL3 family. In terms of assembly, part of the 50S ribosomal subunit. Forms a cluster with proteins L14 and L19. Post-translationally, methylated by PrmB.

One of the primary rRNA binding proteins, it binds directly near the 3'-end of the 23S rRNA, where it nucleates assembly of the 50S subunit. This Pseudomonas syringae pv. tomato (strain ATCC BAA-871 / DC3000) protein is Large ribosomal subunit protein uL3.